The sequence spans 172 residues: Translationally-controlled tumor protein homolog (172 aa).

The TCTP domain occupies 1–172 (MIIYRDCISQ…FKDGLEMEKC (172 aa)).

This sequence belongs to the TCTP family. In terms of tissue distribution, expressed by the venom gland.

It is found in the secreted. Its function is as follows. Venom protein that causes edema, enhances vascular permeability and is likely related to the inflammatory activity of the venom. The chain is Translationally-controlled tumor protein homolog from Crotalus adamanteus (Eastern diamondback rattlesnake).